A 609-amino-acid polypeptide reads, in one-letter code: MSDNPPRMEVCPYCKKPFKRLKSHLPYCKMVGPTIPTDQKVYQSKPATLPRAKKMKGPIKDLIKAEGKELETENEERNSKLMMDKPEQTVKTFPLPAVGLERATTTKADKDIKNPIQPSFKMLKNTKPKTTFQEETKAQFYTSEKTSPKRELAEDLPKSGESRCNPLEAGASLLVGSIEPSLSNQDRKYSSTLPNDVQTTSGDLKLDKIDPQRQELLVKLLDVPTGDCHISPKNVSDGVKRVRTLLSNERDSKGRDHLSGVPTDVAVTETPEKNTESLILSLKMSSLGKIQVMEKQEKGLTLGVETCGSKGNAEKSMSATGEQEWTVMSHGCENFNTRDSVTEKESQGERPHLSLLIPRETTYEFHSVSQSSSQSLASLATIFLQEKKAEARNHNRVPDVKALMESPEGQLSLEPKSDSQFQASHTGCQSPVCSAQRHTPQSPFTNHAAAAGRKTLRSCVGLEWFPELYPGYLGLGVLPGKPQCWNAMARKPQLNSPQGERLLQVSLLERSSTHIRSLEPPTGLTTSNFSLMRLLGAVQKGWIRCNTTIRKSGFGGITMLSTGYFVLCCSWSFRRLKKLCRPLPWKSTVPPSVGVAKTTGDCRSKTCLD.

The Extracellular segment spans residues 1–554 (MSDNPPRMEV…CNTTIRKSGF (554 aa)). Disordered stretches follow at residues 133–163 (QEET…GESR) and 406–425 (SPEG…QASH). The segment covering 146-161 (TSPKRELAEDLPKSGE) has biased composition (basic and acidic residues). The helical transmembrane segment at 555–571 (GGITMLSTGYFVLCCSW) threads the bilayer. Over 572 to 609 (SFRRLKKLCRPLPWKSTVPPSVGVAKTTGDCRSKTCLD) the chain is Cytoplasmic.

The protein resides in the mitochondrion inner membrane. The protein localises to the mitochondrion matrix. It localises to the mitochondrion nucleoid. Its function is as follows. Critical regulator of mitochondrial DNA (mtDNA) abundance. Binds dsDNA throughout the mitochondrial genome without sequence specificity and controls mtDNA copy number by promoting its replication. Also plays important roles in mitochondrial metabolism and cell proliferation. This chain is Mitochondrial nucleoid-associated protein 1, found in Pongo abelii (Sumatran orangutan).